The sequence spans 182 residues: Nucleoside triphosphate/diphosphate phosphatase (182 aa).

The active-site Proton donor is the Arg-27. Residues Asn-91, Asp-107, Asp-109, Asp-111, Asp-124, and Glu-127 each contribute to the Mg(2+) site.

Belongs to the Ntdp family. Mg(2+) serves as cofactor.

The catalysed reaction is a ribonucleoside 5'-triphosphate + H2O = a ribonucleoside 5'-diphosphate + phosphate + H(+). It catalyses the reaction a ribonucleoside 5'-diphosphate + H2O = a ribonucleoside 5'-phosphate + phosphate + H(+). Its function is as follows. Has nucleoside phosphatase activity towards nucleoside triphosphates and nucleoside diphosphates. This is Nucleoside triphosphate/diphosphate phosphatase from Lactiplantibacillus plantarum (strain ATCC BAA-793 / NCIMB 8826 / WCFS1) (Lactobacillus plantarum).